A 328-amino-acid polypeptide reads, in one-letter code: Phosphatidylglycerol--prolipoprotein diacylglyceryl transferase (328 aa).

3 helical membrane passes run Val-15–Ser-35, Ile-57–Val-77, and Gly-106–Thr-126. Arg-156 provides a ligand contact to a 1,2-diacyl-sn-glycero-3-phospho-(1'-sn-glycerol). Helical transmembrane passes span Gly-242–Leu-262 and Ile-289–Val-309.

This sequence belongs to the Lgt family.

The protein localises to the cell inner membrane. The enzyme catalyses L-cysteinyl-[prolipoprotein] + a 1,2-diacyl-sn-glycero-3-phospho-(1'-sn-glycerol) = an S-1,2-diacyl-sn-glyceryl-L-cysteinyl-[prolipoprotein] + sn-glycerol 1-phosphate + H(+). The protein operates within protein modification; lipoprotein biosynthesis (diacylglyceryl transfer). Catalyzes the transfer of the diacylglyceryl group from phosphatidylglycerol to the sulfhydryl group of the N-terminal cysteine of a prolipoprotein, the first step in the formation of mature lipoproteins. The sequence is that of Phosphatidylglycerol--prolipoprotein diacylglyceryl transferase from Borreliella burgdorferi (strain ATCC 35210 / DSM 4680 / CIP 102532 / B31) (Borrelia burgdorferi).